Reading from the N-terminus, the 122-residue chain is Large ribosomal subunit protein uL18 (122 aa).

The protein belongs to the universal ribosomal protein uL18 family. As to quaternary structure, part of the 50S ribosomal subunit; part of the 5S rRNA/L5/L18/L25 subcomplex. Contacts the 5S and 23S rRNAs.

This is one of the proteins that bind and probably mediate the attachment of the 5S RNA into the large ribosomal subunit, where it forms part of the central protuberance. In Syntrophotalea carbinolica (strain DSM 2380 / NBRC 103641 / GraBd1) (Pelobacter carbinolicus), this protein is Large ribosomal subunit protein uL18.